Here is a 196-residue protein sequence, read N- to C-terminus: Holliday junction branch migration complex subunit RuvA (196 aa).

Residues 1–63 (MINKIYGKII…EDEIKLFGFL (63 aa)) form a domain I region. The interval 64 to 138 (NVSEREVFEE…GKLVKADELT (75 aa)) is domain II. Position 138 (Thr138) is a region of interest, flexible linker. The domain III stretch occupies residues 139–196 (SSVFKFKDLEQSIVNMGFDRKLVVAAIKEIMLIDEFLMLREVEQEQFLFRETLKRLSG).

It belongs to the RuvA family. Homotetramer. Forms an RuvA(8)-RuvB(12)-Holliday junction (HJ) complex. HJ DNA is sandwiched between 2 RuvA tetramers; dsDNA enters through RuvA and exits via RuvB. An RuvB hexamer assembles on each DNA strand where it exits the tetramer. Each RuvB hexamer is contacted by two RuvA subunits (via domain III) on 2 adjacent RuvB subunits; this complex drives branch migration. In the full resolvosome a probable DNA-RuvA(4)-RuvB(12)-RuvC(2) complex forms which resolves the HJ.

The protein localises to the cytoplasm. Its function is as follows. The RuvA-RuvB-RuvC complex processes Holliday junction (HJ) DNA during genetic recombination and DNA repair, while the RuvA-RuvB complex plays an important role in the rescue of blocked DNA replication forks via replication fork reversal (RFR). RuvA specifically binds to HJ cruciform DNA, conferring on it an open structure. The RuvB hexamer acts as an ATP-dependent pump, pulling dsDNA into and through the RuvAB complex. HJ branch migration allows RuvC to scan DNA until it finds its consensus sequence, where it cleaves and resolves the cruciform DNA. The protein is Holliday junction branch migration complex subunit RuvA of Borrelia hermsii (strain HS1 / DAH).